A 348-amino-acid chain; its full sequence is Rhodopsin (348 aa).

An N-acetylmethionine modification is found at M1. At 1-36 the chain is on the extracellular side; it reads MNGTEGPNFYVPYSNKSGVVRSPYEEPQYYLAEPWM. N-linked (GlcNAc...) asparagine glycosylation is found at N2 and N15. The helical transmembrane segment at 37 to 61 threads the bilayer; that stretch reads FSCLAAYMFMLIVLGFPINFLTLYV. Topologically, residues 62-73 are cytoplasmic; sequence TIQHKKLRTPLN. Residues 74–96 traverse the membrane as a helical segment; sequence YILLNLAVADLFMVICGFTTTLV. At 97–110 the chain is on the extracellular side; it reads TSLNGYFVFGTTGC. C110 and C187 are joined by a disulfide. The chain crosses the membrane as a helical span at residues 111–133; it reads LVEGFFATTGGEVALWALVVLAI. The 'Ionic lock' involved in activated form stabilization signature appears at 134–136; it reads ERY. Topologically, residues 134-152 are cytoplasmic; it reads ERYIVVCKPMSNFRFGENH. The helical transmembrane segment at 153–173 threads the bilayer; sequence AIMGVAFTWIMALACSVPPIF. Over 174 to 202 the chain is Extracellular; that stretch reads GWSRYIPEGMQCSCGIDYYTLNPEFNNES. E201 serves as a coordination point for Zn(2+). Residues 203–224 traverse the membrane as a helical segment; it reads FVIYMFVVHFIIPLTVIFFCYG. The Cytoplasmic portion of the chain corresponds to 225-252; it reads QLVFTVKEAAAQQQESATTQKAEKEVTR. Residues 253–274 form a helical membrane-spanning segment; that stretch reads MVIIMVIAFLICWVPYASVAFY. Residues 275–286 lie on the Extracellular side of the membrane; the sequence is IFTHQGSDFGPI. Residue Q279 coordinates Zn(2+). The helical transmembrane segment at 287 to 308 threads the bilayer; that stretch reads FMTLPAFFAKSSSIYNPVIYIM. K296 carries the post-translational modification N6-(retinylidene)lysine. The Cytoplasmic portion of the chain corresponds to 309–348; sequence MNKQFRNCMITTLCCGKNPLGDDEASTTASKTETSQVAPA. S-palmitoyl cysteine attachment occurs at residues C322 and C323. Residues 330-348 form an interaction with SAG region; it reads DDEASTTASKTETSQVAPA. S334 is modified (phosphoserine). A phosphothreonine mark is found at T335 and T336. S338 is modified (phosphoserine). A phosphothreonine mark is found at T340 and T342. At S343 the chain carries Phosphoserine.

Belongs to the G-protein coupled receptor 1 family. Opsin subfamily. As to quaternary structure, homodimer. May form a complex composed of RHO, GRK1 and RCVRN in a Ca(2+)-dependent manner; RCVRN prevents the interaction between GRK1 and RHO. Interacts with GRK1. Interacts (phosphorylated form) with SAG. Interacts with GNAT1. Interacts with GNAT3. SAG and G-proteins compete for a common binding site. Interacts with PRCD; the interaction promotes PRCD stability. Forms a complex with ASAP1 and ARF4. Forms a complex with ASAP1, RAB11A, Rabin8/RAB3IP, ARF4 and RAB11FIP3; the complex regulates Golgi-to-cilia rhodopsin/RHO transport in photoreceptors. Phosphorylated on some or all of the serine and threonine residues present in the C-terminal region. In terms of processing, contains one covalently linked retinal chromophore. Upon light absorption, the covalently bound 11-cis-retinal is converted to all-trans-retinal. After hydrolysis of the Schiff base and release of the covalently bound all-trans-retinal, active rhodopsin is regenerated by binding of a fresh molecule of 11-cis-retinal.

The protein resides in the membrane. It is found in the cell projection. It localises to the cilium. Its subcellular location is the photoreceptor outer segment. Functionally, photoreceptor required for image-forming vision at low light intensity. Required for photoreceptor cell viability after birth. Light-induced isomerization of 11-cis to all-trans retinal triggers a conformational change that activates signaling via G-proteins. Subsequent receptor phosphorylation mediates displacement of the bound G-protein alpha subunit by the arrestin SAG and terminates signaling. The protein is Rhodopsin (RHO) of Sminthopsis crassicaudata (Fat-tailed dunnart).